Consider the following 333-residue polypeptide: Nuclear egress protein 1 (333 aa).

Residues 45 to 64 are disordered; sequence SRRYKSVSRSGPSMRVRSRT. A CCCH-type zinc finger spans residues 128 to 251; it reads CLSLSGMGYH…YVIFPGKSVH (124 aa).

This sequence belongs to the herpesviridae NEC1 protein family. In terms of assembly, forms a heterohexameric complex with NEC2. Interacts with capsid vertex specific component 2/CVC2; this interaction directs the capsid to the host inner nuclear membrane to initiate budding. Phosphorylated at serine residues in the N-terminus. This phosphorylation regulates the localization within the inner nuclear membrane.

It localises to the host nucleus inner membrane. Functionally, plays an essential role in virion nuclear egress, the first step of virion release from infected cell. Within the host nucleus, NEC1 interacts with the newly formed capsid through the vertexes and directs it to the inner nuclear membrane by associating with NEC2. Induces the budding of the capsid at the inner nuclear membrane as well as its envelopment into the perinuclear space. There, the NEC1/NEC2 complex promotes the fusion of the enveloped capsid with the outer nuclear membrane and the subsequent release of the viral capsid into the cytoplasm where it will reach the secondary budding sites in the host Golgi or trans-Golgi network. This chain is Nuclear egress protein 1, found in Varicella-zoster virus (strain Dumas) (HHV-3).